Here is a 154-residue protein sequence, read N- to C-terminus: Myoglobin (154 aa).

A Globin domain is found at 2–148; it reads VLTDAEWHLV…FRKDIAAKYK (147 aa). Position 65 (H65) interacts with nitrite. H65 lines the O2 pocket. T68 is modified (phosphothreonine). Residue H94 coordinates heme b.

The protein belongs to the globin family. In terms of assembly, monomeric.

The protein resides in the cytoplasm. It localises to the sarcoplasm. It catalyses the reaction Fe(III)-heme b-[protein] + nitric oxide + H2O = Fe(II)-heme b-[protein] + nitrite + 2 H(+). The catalysed reaction is H2O2 + AH2 = A + 2 H2O. Functionally, monomeric heme protein which primary function is to store oxygen and facilitate its diffusion within muscle tissues. Reversibly binds oxygen through a pentacoordinated heme iron and enables its timely and efficient release as needed during periods of heightened demand. Depending on the oxidative conditions of tissues and cells, and in addition to its ability to bind oxygen, it also has a nitrite reductase activity whereby it regulates the production of bioactive nitric oxide. Under stress conditions, like hypoxia and anoxia, it also protects cells against reactive oxygen species thanks to its pseudoperoxidase activity. The polypeptide is Myoglobin (MB) (Balaenoptera physalus (Fin whale)).